A 616-amino-acid chain; its full sequence is Chaperone protein DnaK (616 aa).

Thr175 carries the phosphothreonine; by autocatalysis modification. A disordered region spans residues 579 to 605 (GGDPSQAGGFDPNAAGGAQQAPHDDNV).

The protein belongs to the heat shock protein 70 family.

Its function is as follows. Acts as a chaperone. In Clostridium botulinum (strain Alaska E43 / Type E3), this protein is Chaperone protein DnaK.